The primary structure comprises 216 residues: Probable transaldolase (216 aa).

Lys83 acts as the Schiff-base intermediate with substrate in catalysis.

It belongs to the transaldolase family. Type 3B subfamily.

The protein localises to the cytoplasm. It carries out the reaction D-sedoheptulose 7-phosphate + D-glyceraldehyde 3-phosphate = D-erythrose 4-phosphate + beta-D-fructose 6-phosphate. Its pathway is carbohydrate degradation; pentose phosphate pathway; D-glyceraldehyde 3-phosphate and beta-D-fructose 6-phosphate from D-ribose 5-phosphate and D-xylulose 5-phosphate (non-oxidative stage): step 2/3. Functionally, transaldolase is important for the balance of metabolites in the pentose-phosphate pathway. This Sorangium cellulosum (strain So ce56) (Polyangium cellulosum (strain So ce56)) protein is Probable transaldolase.